The chain runs to 587 residues: Monocopper oxidase-like protein SKU5 (587 aa).

An N-terminal signal peptide occupies residues 1-20 (MDLFKILLLVFFVNISFCFA). N14 and N58 each carry an N-linked (GlcNAc...) asparagine glycan. H80 serves as a coordination point for Cu cation. 10 N-linked (GlcNAc...) asparagine glycosylation sites follow: N107, N169, N200, N257, N278, N293, N342, N362, N430, and N444. H452 lines the Cu cation pocket. N534 carries an N-linked (GlcNAc...) asparagine glycan. S562 carries GPI-anchor amidated serine lipidation. Residues 563 to 587 (ASKSIGFTSLSMVVMALVMMMMLQH) constitute a propeptide, removed in mature form.

This sequence belongs to the multicopper oxidase family. It depends on Cu cation as a cofactor. In terms of tissue distribution, expressed in roots, hypocotyls, cotyledons, leaves, stems and flowers.

It localises to the secreted. It is found in the cell wall. The protein localises to the cell membrane. Functionally, may be a monocopper oxidase of unknown specificity. Involved in directional growth processes, possibly by participating in cell wall expansion. The sequence is that of Monocopper oxidase-like protein SKU5 (SKU5) from Arabidopsis thaliana (Mouse-ear cress).